The primary structure comprises 293 residues: Zinc metalloproteinase nas-2 (293 aa).

Positions 1–17 (MIFPLLLTLILPNFVAP) are cleaved as a signal peptide. Residues 18–67 (KVLEPEKDDEIAVSTQREKTFFDMKLILTKLPTFEPSKYGHINIPLRKKR) constitute a propeptide that is removed on maturation. Positions 67–260 (RGIALHPLQW…ININTFYKCK (194 aa)) constitute a Peptidase M12A domain. N-linked (GlcNAc...) asparagine glycosylation is present at Asn111. Disulfide bonds link Cys114–Cys259 and Cys139–Cys169. Residue His180 participates in Zn(2+) binding. The active site involves Glu181. Positions 184 and 190 each coordinate Zn(2+). Asn287 carries an N-linked (GlcNAc...) asparagine glycan.

It depends on Zn(2+) as a cofactor.

The protein resides in the secreted. Its function is as follows. Metalloprotease. This chain is Zinc metalloproteinase nas-2 (nas-2), found in Caenorhabditis elegans.